Here is a 301-residue protein sequence, read N- to C-terminus: Porphobilinogen deaminase (301 aa).

At C242 the chain carries S-(dipyrrolylmethanemethyl)cysteine.

Belongs to the HMBS family. As to quaternary structure, monomer. It depends on dipyrromethane as a cofactor.

It catalyses the reaction 4 porphobilinogen + H2O = hydroxymethylbilane + 4 NH4(+). It functions in the pathway porphyrin-containing compound metabolism; protoporphyrin-IX biosynthesis; coproporphyrinogen-III from 5-aminolevulinate: step 2/4. Tetrapolymerization of the monopyrrole PBG into the hydroxymethylbilane pre-uroporphyrinogen in several discrete steps. This Rickettsia akari (strain Hartford) protein is Porphobilinogen deaminase.